A 202-amino-acid chain; its full sequence is Alpha-1-acid glycoprotein (202 aa).

An N-terminal signal peptide occupies residues 1–18 (MALLWALAVLSHLPLLDA). N34, N57, N94, N104, and N136 each carry an N-linked (GlcNAc...) asparagine glycan. A disulfide bond links C91 and C184.

It belongs to the calycin superfamily. Lipocalin family.

It is found in the secreted. Functionally, functions as a transport protein in the blood stream. Binds various ligands in the interior of its beta-barrel domain. Appears to function in modulating the activity of the immune system during the acute-phase reaction. The sequence is that of Alpha-1-acid glycoprotein (ORM1) from Bos taurus (Bovine).